We begin with the raw amino-acid sequence, 317 residues long: Protein RTA1 (317 aa).

The Extracellular portion of the chain corresponds to 1–16 (MAKDGFELYRYTPELG). The helical transmembrane segment at 17-37 (ASILFTVLFAVSGVAFVILLF) threads the bilayer. Over 38–64 (HYSVKSKRRVGSLMKSQPVLRYYGTVN) the chain is Cytoplasmic. The helical transmembrane segment at 65–85 (LAGAYIPFIFGCFVECVGFAF) threads the bilayer. Residues 86 to 99 (RCKSSKDTTLLNPY) are Extracellular-facing. Residues 100-120 (IIQTVFLLVSPTLYAASIYMI) form a helical membrane-spanning segment. Residues 121–142 (FGRMATLLFAENLMIMPARFNT) are Cytoplasmic-facing. The chain crosses the membrane as a helical span at residues 143 to 163 (TIFVIGDVGSLLLQAIGGAMM). Residues 164 to 178 (SKVTSASSGSHLVTA) are Extracellular-facing. Residues 179–199 (GLFIQIAFFGLFIINEVLFIF) traverse the membrane as a helical segment. Residues 200 to 214 (KMSKKPTNVSVRYGS) are Cytoplasmic-facing. Residues 215–235 (WKYLNIALLVNSFLILIRSIV) traverse the membrane as a helical segment. Residues 236-259 (RAVEFIQGYDGEIASHEWYLYIFD) lie on the Extracellular side of the membrane. Residues 260 to 280 (GLPMFLLVLIFIVAFPLINIF) traverse the membrane as a helical segment. Residues 281-317 (RIHEESIQAQQSARFDGTDYPDVEVTSIEEDLASKSE) are Cytoplasmic-facing.

This sequence belongs to the lipid-translocating exporter (LTE) (TC 9.A.26.1) family.

It localises to the membrane. In terms of biological role, involved in 7-aminocholesterol resistance. This Saccharomyces cerevisiae (strain ATCC 204508 / S288c) (Baker's yeast) protein is Protein RTA1 (RTA1).